Reading from the N-terminus, the 397-residue chain is Acetate kinase 1 (397 aa).

A Mg(2+)-binding site is contributed by asparagine 8. Lysine 15 provides a ligand contact to ATP. A substrate-binding site is contributed by arginine 89. Aspartate 146 functions as the Proton donor/acceptor in the catalytic mechanism. Residues 206-210, 281-283, and 329-333 each bind ATP; these read HLGNG, DFR, and GVGEN. Mg(2+) is bound at residue glutamate 380.

Belongs to the acetokinase family. In terms of assembly, homodimer. The cofactor is Mg(2+). Mn(2+) is required as a cofactor.

It is found in the cytoplasm. It carries out the reaction acetate + ATP = acetyl phosphate + ADP. It functions in the pathway metabolic intermediate biosynthesis; acetyl-CoA biosynthesis; acetyl-CoA from acetate: step 1/2. Functionally, catalyzes the formation of acetyl phosphate from acetate and ATP. Can also catalyze the reverse reaction. The protein is Acetate kinase 1 of Listeria monocytogenes serotype 4b (strain F2365).